A 613-amino-acid chain; its full sequence is Leucine aminopeptidase 2 (613 aa).

Residues 134–136 (QAQ) and 265–270 (PYGGME) each bind a peptide. Residue histidine 294 coordinates Zn(2+). Catalysis depends on glutamate 295, which acts as the Proton acceptor. The Zn(2+) site is built by histidine 298 and glutamate 317. The active-site Proton donor is tyrosine 382.

It belongs to the peptidase M1 family. Zn(2+) is required as a cofactor.

It is found in the cytoplasm. Its subcellular location is the nucleus. It catalyses the reaction an epoxide + H2O = an ethanediol. Its function is as follows. Aminopeptidase that preferentially cleaves di- and tripeptides. Also has low epoxide hydrolase activity (in vitro). Can hydrolyze the epoxide leukotriene LTA(4) but it forms preferentially 5,6-dihydroxy-7,9,11,14-eicosatetraenoic acid rather than the cytokine leukotriene B(4) as the product compared to the homologous mammalian enzyme (in vitro). In Pyricularia oryzae (strain 70-15 / ATCC MYA-4617 / FGSC 8958) (Rice blast fungus), this protein is Leucine aminopeptidase 2.